We begin with the raw amino-acid sequence, 261 residues long: Cytochrome c oxidase subunit 3 (261 aa).

Residues 1-15 (MTHQTHAYHMVNPSP) are Mitochondrial matrix-facing. Residues 16 to 34 (WPLTGALSALLMTSGLVMW) form a helical membrane-spanning segment. At 35-40 (FHYNST) the chain is on the mitochondrial intermembrane side. A helical transmembrane segment spans residues 41–66 (LLLTLGLTTNLLTMYQWWRDIIREST). Over 67 to 72 (FQGHHT) the chain is Mitochondrial matrix. A helical transmembrane segment spans residues 73 to 105 (PAVQKGLRYGMILFIISEVFFFSGFFWAFYHSS). Over 106 to 128 (LAPTPELGGCWPPTGIHPLNPME) the chain is Mitochondrial intermembrane. Residues 129–152 (VPLLNTSVLLASGVSITWAHHSLM) traverse the membrane as a helical segment. The Mitochondrial matrix segment spans residues 153–155 (EGN). A helical membrane pass occupies residues 156–183 (RKHMLQALFITISLGIYFTLLQASEYYE). Over 184-190 (APFTISD) the chain is Mitochondrial intermembrane. Residues 191 to 223 (GVYGSTFFVATGFHGLHVIIGSTFLIVCFLRQL) traverse the membrane as a helical segment. Residues 224 to 232 (KFHFTSNHH) are Mitochondrial matrix-facing. A helical transmembrane segment spans residues 233 to 256 (FGFEAAAWYWHFVDVVWLFLYVSI). At 257-261 (YWWGS) the chain is on the mitochondrial intermembrane side.

Belongs to the cytochrome c oxidase subunit 3 family. Component of the cytochrome c oxidase (complex IV, CIV), a multisubunit enzyme composed of 14 subunits. The complex is composed of a catalytic core of 3 subunits MT-CO1, MT-CO2 and MT-CO3, encoded in the mitochondrial DNA, and 11 supernumerary subunits COX4I, COX5A, COX5B, COX6A, COX6B, COX6C, COX7A, COX7B, COX7C, COX8 and NDUFA4, which are encoded in the nuclear genome. The complex exists as a monomer or a dimer and forms supercomplexes (SCs) in the inner mitochondrial membrane with NADH-ubiquinone oxidoreductase (complex I, CI) and ubiquinol-cytochrome c oxidoreductase (cytochrome b-c1 complex, complex III, CIII), resulting in different assemblies (supercomplex SCI(1)III(2)IV(1) and megacomplex MCI(2)III(2)IV(2)).

Its subcellular location is the mitochondrion inner membrane. The catalysed reaction is 4 Fe(II)-[cytochrome c] + O2 + 8 H(+)(in) = 4 Fe(III)-[cytochrome c] + 2 H2O + 4 H(+)(out). Its function is as follows. Component of the cytochrome c oxidase, the last enzyme in the mitochondrial electron transport chain which drives oxidative phosphorylation. The respiratory chain contains 3 multisubunit complexes succinate dehydrogenase (complex II, CII), ubiquinol-cytochrome c oxidoreductase (cytochrome b-c1 complex, complex III, CIII) and cytochrome c oxidase (complex IV, CIV), that cooperate to transfer electrons derived from NADH and succinate to molecular oxygen, creating an electrochemical gradient over the inner membrane that drives transmembrane transport and the ATP synthase. Cytochrome c oxidase is the component of the respiratory chain that catalyzes the reduction of oxygen to water. Electrons originating from reduced cytochrome c in the intermembrane space (IMS) are transferred via the dinuclear copper A center (CU(A)) of subunit 2 and heme A of subunit 1 to the active site in subunit 1, a binuclear center (BNC) formed by heme A3 and copper B (CU(B)). The BNC reduces molecular oxygen to 2 water molecules using 4 electrons from cytochrome c in the IMS and 4 protons from the mitochondrial matrix. In Rhinoceros unicornis (Greater Indian rhinoceros), this protein is Cytochrome c oxidase subunit 3 (MT-CO3).